Consider the following 255-residue polypeptide: uncharacterized protein (255 aa).

The N-terminal stretch at 1–23 is a signal peptide; sequence MKRLNKLVLYISFLILVISFTAG. The N-palmitoyl cysteine moiety is linked to residue Cys-24. Cys-24 carries S-diacylglycerol cysteine lipidation.

It belongs to the staphylococcal tandem lipoprotein family.

It is found in the cell membrane. This is an uncharacterized protein from Staphylococcus aureus (strain NCTC 8325 / PS 47).